Here is a 134-residue protein sequence, read N- to C-terminus: Phospholipase A2 (134 aa).

Ca(2+) contacts are provided by W8, G10, and G12. Intrachain disulfides connect C9-C31, C30-C70, C37-C63, C61-C95, and C105-C113. N-linked (GlcNAc...) asparagine glycosylation occurs at N13. Residue H34 is part of the active site. D35 lines the Ca(2+) pocket. Residue D64 is part of the active site.

Belongs to the phospholipase A2 family. Group III subfamily. Ca(2+) is required as a cofactor. In terms of tissue distribution, expressed by the venom gland.

It is found in the secreted. The catalysed reaction is a 1,2-diacyl-sn-glycero-3-phosphocholine + H2O = a 1-acyl-sn-glycero-3-phosphocholine + a fatty acid + H(+). Its function is as follows. PLA2 catalyzes the calcium-dependent hydrolysis of the 2-acyl groups in 3-sn-phosphoglycerides. The sequence is that of Phospholipase A2 from Apis dorsata (Giant honeybee).